Consider the following 98-residue polypeptide: Major carboxysome shell protein CsoS1A (98 aa).

The region spanning 8-93 (ALGMIETRGL…VHSEVENILP (86 aa)) is the BMC domain.

This sequence belongs to the bacterial microcompartments protein family. CsoS1 subfamily. As to quaternary structure, homohexamer with a small central pore; the concave side is mostly positive electrostatic potential, whereas the convex side is mostly negative electrostatic potential. Forms a CsoS2-CsoS1-RuBisCO complex. Interacts with the N-terminus (residues 1-136) of RuBisCO (CbbL).

It localises to the carboxysome. The major shell protein of the carboxysome, a polyhedral inclusion where RuBisCO (ribulose bisphosphate carboxylase, ccbL-ccbS) is sequestered. Assembles into hexamers which make sheets that form the facets of the polyhedral carboxysome. The shell probably limits the diffusion of CO(2) into and out of the carboxysome. Molecular modeling shows the central pore of this protein is selectively permeable to anions such as HCO(3) rather than CO(2) or O(2). There are estimated to be 2970 CsoS1A/CsoS1C proteins per carboxysome (the proteins differ by only 1 residue). Its function is as follows. Unlike beta-carboxysomes, alpha-carboxysomes (Cb) can form without cargo protein. CsoS2 is essential for Cb formation and is also capable of targeting foreign proteins to the Cb. The Cb shell assembles with the aid of CsoS2; CsoS1A, CsoS1B and CsoS1C form the majority of the shell while CsoS4A and CsoS4B form vertices. CsoS1D forms pseudohexamers that probably control metabolite flux into and out of the shell. This is Major carboxysome shell protein CsoS1A from Halothiobacillus neapolitanus (strain ATCC 23641 / c2) (Thiobacillus neapolitanus).